The chain runs to 335 residues: D-arabinose 1-dehydrogenase (335 aa).

The active-site Proton donor is the tyrosine 58. Histidine 124 contacts substrate. 221–287 provides a ligand contact to NAD(+); that stretch reads SLLRSQETRQ…VSSMEELKLA (67 aa).

Belongs to the aldo/keto reductase family. Aldo/keto reductase 2 subfamily.

It catalyses the reaction D-arabinose + NAD(+) = D-arabinono-1,4-lactone + NADH + H(+). This Saccharomyces cerevisiae (strain ATCC 204508 / S288c) (Baker's yeast) protein is D-arabinose 1-dehydrogenase (ARA2).